The sequence spans 69 residues: Arabinogalactan protein 24 (69 aa).

Positions 1-25 are cleaved as a signal peptide; sequence MMMMTKMFVQIAVVCLLATMAVVSA. A 4-hydroxyproline mark is found at proline 34, proline 36, proline 38, and proline 40. Proline 34, proline 36, proline 38, and proline 40 each carry an O-linked (Ara...) hydroxyproline glycan. Serine 42 carries the GPI-anchor amidated serine lipid modification. A propeptide spans 43-69 (removed in mature form); it reads SSTVVSATNMFTVLAIAAVALVVGSNH.

It belongs to the AG-peptide AGP family. Post-translationally, contains 4-hydroxyproline; hydroxylated on Pro-34, Pro-36, Pro-38 and Pro-40. O-glycosylated on hydroxyprolines; noncontiguous hydroxylproline residues are glycosylated with arabinogalactan.

The protein localises to the cell membrane. Its function is as follows. Proteoglycan that seems to be implicated in diverse developmental roles such as differentiation, cell-cell recognition, embryogenesis and programmed cell death. The polypeptide is Arabinogalactan protein 24 (Arabidopsis thaliana (Mouse-ear cress)).